The primary structure comprises 527 residues: Phosphoenolpyruvate carboxykinase (ATP) (527 aa).

Substrate is bound by residues arginine 56, tyrosine 192, and lysine 198. ATP is bound by residues lysine 198, histidine 217, and 233 to 241 (GLSGTGKTT). The Mn(2+) site is built by lysine 198 and histidine 217. Aspartate 254 is a Mn(2+) binding site. 3 residues coordinate ATP: glutamate 282, arginine 319, and threonine 444. Arginine 319 lines the substrate pocket.

The protein belongs to the phosphoenolpyruvate carboxykinase (ATP) family. Mn(2+) serves as cofactor.

It is found in the cytoplasm. It carries out the reaction oxaloacetate + ATP = phosphoenolpyruvate + ADP + CO2. It functions in the pathway carbohydrate biosynthesis; gluconeogenesis. Functionally, involved in the gluconeogenesis. Catalyzes the conversion of oxaloacetate (OAA) to phosphoenolpyruvate (PEP) through direct phosphoryl transfer between the nucleoside triphosphate and OAA. The sequence is that of Phosphoenolpyruvate carboxykinase (ATP) from Bacillus velezensis (strain DSM 23117 / BGSC 10A6 / LMG 26770 / FZB42) (Bacillus amyloliquefaciens subsp. plantarum).